The following is a 162-amino-acid chain: Heat shock protein beta-6 (162 aa).

The involved in stabilization of the HSPB1:HSBP6 heterodimer stretch occupies residues 1 to 72 (MEIPVPVQPS…PTAQVSTDSG (72 aa)). Position 16 is a phosphoserine (Ser-16). Positions 56–162 (RAPSVALPTA…AQLPSPPAAK (107 aa)) constitute a sHSP domain. The residue at position 66 (Gln-66) is a Deamidated glutamine. Ser-157 is subject to Phosphoserine.

Belongs to the small heat shock protein (HSP20) family. As to quaternary structure, homodimer. Small heat shock proteins form high molecular mass oligomers containing variable number of monomers; these oligomers display a very flexible quaternary structure easily exchanging their subunits. Heterooligomer with HSPB1; formed through oligomerization of HSPB1:HSBP6 dimers; subunit exchange leads to formation of at least two different heterooligomeric complexes, differing in variable quantities of HSPB1 and HSPB6 homodimers in addition to HSPB1:HSPB6 heterodimers. Heterooligomer with CRYAB; large heterooligomers consist of CRYAB homodimers and HSPB5:HSPB6 heterodimers but lacking HSPB6 homodimers. Interacts with BAG3. Interacts (phosphorylated) with YWHAZ. Interacts with PDE4A and PDE4D; required for maintenance of the non-phosphorylated state of HSPB6 under basal conditions. Interacts with KDR. Interacts with PRKD1. Phosphorylated at Ser-16 by PKA and probably PKD1K; required to protect cardiomyocytes from apoptosis.

It localises to the cytoplasm. Its subcellular location is the nucleus. The protein resides in the secreted. Its function is as follows. Small heat shock protein which functions as a molecular chaperone probably maintaining denatured proteins in a folding-competent state. Seems to have versatile functions in various biological processes. Plays a role in regulating muscle function such as smooth muscle vasorelaxation and cardiac myocyte contractility. May regulate myocardial angiogenesis implicating KDR. Overexpression mediates cardioprotection and angiogenesis after induced damage. Stabilizes monomeric YWHAZ thereby supporting YWHAZ chaperone-like activity. This chain is Heat shock protein beta-6 (Hspb6), found in Mus musculus (Mouse).